Reading from the N-terminus, the 353-residue chain is Immune-associated nucleotide-binding protein 8 (353 aa).

The segment covering 1–10 has biased composition (polar residues); sequence MANDQKNSES. The tract at residues 1 to 43 is disordered; the sequence is MANDQKNSESFPAKEDHKKDDAAAPAEVDHKDEFSASQPHPVE. A compositionally biased stretch (basic and acidic residues) spans 12–34; sequence PAKEDHKKDDAAAPAEVDHKDEF. The AIG1-type G domain occupies 40–248; that stretch reads HPVENIVLVG…YTDEMYHMIK (209 aa). A G1 region spans residues 49–56; the sequence is GRTGNGKS. GTP is bound by residues 49-57 and Ser-70; that span reads GRTGNGKSA. Residues 76-80 are G2; sequence GVTME. The G3 stretch occupies residues 98 to 101; sequence DTPG. Positions 168 to 171 are G4; that stretch reads TGGD. The segment at 207–209 is G5; the sequence is DNK. Residue Asn-208 coordinates GTP. A coiled-coil region spans residues 244–291; it reads YHMIKEENERHKKEQEELESKGHSEEQLAALMKELQIMNERNLKAMAE.

This sequence belongs to the TRAFAC class TrmE-Era-EngA-EngB-Septin-like GTPase superfamily. AIG1/Toc34/Toc159-like paraseptin GTPase family. IAN subfamily. As to expression, mainly expressed in leaves.

This is Immune-associated nucleotide-binding protein 8 from Arabidopsis thaliana (Mouse-ear cress).